Here is a 233-residue protein sequence, read N- to C-terminus: 3-dehydroquinate dehydratase (233 aa).

3-dehydroquinate contacts are provided by residues 39 to 41 and R73; that span reads EIR. H132 acts as the Proton donor/acceptor in catalysis. The active-site Schiff-base intermediate with substrate is the K159. Residues R196 and Q219 each contribute to the 3-dehydroquinate site.

The protein belongs to the type-I 3-dehydroquinase family. In terms of assembly, homodimer.

It carries out the reaction 3-dehydroquinate = 3-dehydroshikimate + H2O. It functions in the pathway metabolic intermediate biosynthesis; chorismate biosynthesis; chorismate from D-erythrose 4-phosphate and phosphoenolpyruvate: step 3/7. Functionally, involved in the third step of the chorismate pathway, which leads to the biosynthesis of aromatic amino acids. Catalyzes the cis-dehydration of 3-dehydroquinate (DHQ) and introduces the first double bond of the aromatic ring to yield 3-dehydroshikimate. In Methanococcoides burtonii (strain DSM 6242 / NBRC 107633 / OCM 468 / ACE-M), this protein is 3-dehydroquinate dehydratase.